Here is a 56-residue protein sequence, read N- to C-terminus: Large ribosomal subunit protein bL32 (56 aa).

The protein belongs to the bacterial ribosomal protein bL32 family.

This Synechococcus sp. (strain CC9311) protein is Large ribosomal subunit protein bL32.